Consider the following 131-residue polypeptide: Sperm microtubule inner protein 11 (131 aa).

A disordered region spans residues 17–44 (SKKRDKTEETNQKDPVPTRLPPIFSEDG).

As to quaternary structure, microtubule inner protein component of sperm flagellar doublet microtubules. Expressed in sperm.

The protein resides in the cytoplasm. It localises to the cytoskeleton. It is found in the flagellum axoneme. In terms of biological role, microtubule inner protein (MIP) part of the dynein-decorated doublet microtubules (DMTs) in flagellum axoneme. May serve to reinforce and thus stabilize the microtubule structure in the sperm flagella. This is Sperm microtubule inner protein 11 (SPMIP11) from Bos taurus (Bovine).